The chain runs to 572 residues: Proline--tRNA ligase (572 aa).

It belongs to the class-II aminoacyl-tRNA synthetase family. ProS type 1 subfamily. As to quaternary structure, homodimer.

It localises to the cytoplasm. The catalysed reaction is tRNA(Pro) + L-proline + ATP = L-prolyl-tRNA(Pro) + AMP + diphosphate. In terms of biological role, catalyzes the attachment of proline to tRNA(Pro) in a two-step reaction: proline is first activated by ATP to form Pro-AMP and then transferred to the acceptor end of tRNA(Pro). As ProRS can inadvertently accommodate and process non-cognate amino acids such as alanine and cysteine, to avoid such errors it has two additional distinct editing activities against alanine. One activity is designated as 'pretransfer' editing and involves the tRNA(Pro)-independent hydrolysis of activated Ala-AMP. The other activity is designated 'posttransfer' editing and involves deacylation of mischarged Ala-tRNA(Pro). The misacylated Cys-tRNA(Pro) is not edited by ProRS. This is Proline--tRNA ligase from Pectobacterium atrosepticum (strain SCRI 1043 / ATCC BAA-672) (Erwinia carotovora subsp. atroseptica).